We begin with the raw amino-acid sequence, 372 residues long: Formylglycine-generating enzyme (372 aa).

Positions 1 to 31 (MAAPAREPALRCCIRLARVFLLLVLACEVAG) are cleaved as a signal peptide. Cysteines 48 and 50 form a disulfide. The segment at 61–80 (SSAAAQRYSREANAPGLTSG) is disordered. E128 is a Ca(2+) binding site. An N-linked (GlcNAc...) asparagine glycan is attached at N139. Disulfide bonds link C216-C363 and C233-C344. Ca(2+)-binding residues include N257, I258, D271, F273, N291, G294, and E298. Residues C334 and C339 each contribute to the Cu(2+) site. The interval 339 to 358 (CYRYRCAARSQNTPDSSASN) is interaction with sulfatases.

Belongs to the sulfatase-modifying factor family. Monomer, homodimer and heterodimer with SUMF2. Requires Cu(2+) as cofactor. In terms of processing, N-glycosylated. Contains high-mannose-type oligosaccharides.

Its subcellular location is the endoplasmic reticulum lumen. It catalyses the reaction L-cysteinyl-[sulfatase] + 2 a thiol + O2 = an organic disulfide + 3-oxo-L-alanyl-[sulfatase] + hydrogen sulfide + H2O + H(+). It participates in protein modification; sulfatase oxidation. Functionally, oxidase that catalyzes the conversion of cysteine to 3-oxoalanine on target proteins, using molecular oxygen and an unidentified reducing agent. 3-oxoalanine modification, which is also named formylglycine (fGly), occurs in the maturation of arylsulfatases and some alkaline phosphatases that use the hydrated form of 3-oxoalanine as a catalytic nucleophile. Known substrates include GALNS, ARSA, STS and ARSE. This is Formylglycine-generating enzyme from Mus musculus (Mouse).